Consider the following 245-residue polypeptide: Thiamine phosphate phosphatase-like protein (245 aa).

Aspartate 9 functions as the Nucleophile in the catalytic mechanism. Aspartate 9, aspartate 11, and aspartate 179 together coordinate Mg(2+). Aspartate 11 functions as the Proton donor in the catalytic mechanism.

This sequence belongs to the HAD-like hydrolase superfamily. Monomer. It depends on Mg(2+) as a cofactor.

The catalysed reaction is thiamine phosphate + H2O = thiamine + phosphate. HAD-like hydrolase that has a thiamine monophosphate phosphatase activity in a heterologous system. Does not contribute to thiamine monophosphate phosphatase activity in planta. The protein is Thiamine phosphate phosphatase-like protein of Arabidopsis thaliana (Mouse-ear cress).